We begin with the raw amino-acid sequence, 116 residues long: uncharacterized protein (116 aa).

Residues 20–42 traverse the membrane as a helical segment; sequence YLNKYYSVITYFLAFLTKFAILL. The tract at residues 95–116 is disordered; sequence IEFQSKSSPVPPASESNKGINE.

It localises to the membrane. This is an uncharacterized protein from Saccharomyces cerevisiae (strain ATCC 204508 / S288c) (Baker's yeast).